The primary structure comprises 486 residues: Aspartyl/glutamyl-tRNA(Asn/Gln) amidotransferase subunit B (486 aa).

This sequence belongs to the GatB/GatE family. GatB subfamily. In terms of assembly, heterotrimer of A, B and C subunits.

The catalysed reaction is L-glutamyl-tRNA(Gln) + L-glutamine + ATP + H2O = L-glutaminyl-tRNA(Gln) + L-glutamate + ADP + phosphate + H(+). It catalyses the reaction L-aspartyl-tRNA(Asn) + L-glutamine + ATP + H2O = L-asparaginyl-tRNA(Asn) + L-glutamate + ADP + phosphate + 2 H(+). Functionally, allows the formation of correctly charged Asn-tRNA(Asn) or Gln-tRNA(Gln) through the transamidation of misacylated Asp-tRNA(Asn) or Glu-tRNA(Gln) in organisms which lack either or both of asparaginyl-tRNA or glutaminyl-tRNA synthetases. The reaction takes place in the presence of glutamine and ATP through an activated phospho-Asp-tRNA(Asn) or phospho-Glu-tRNA(Gln). This Janthinobacterium sp. (strain Marseille) (Minibacterium massiliensis) protein is Aspartyl/glutamyl-tRNA(Asn/Gln) amidotransferase subunit B.